A 376-amino-acid chain; its full sequence is Glutamate 5-kinase (376 aa).

An ATP-binding site is contributed by lysine 15. Residues serine 56, aspartate 143, and asparagine 155 each contribute to the substrate site. Serine 175 to aspartate 176 serves as a coordination point for ATP. The region spanning lysine 281–threonine 358 is the PUA domain.

This sequence belongs to the glutamate 5-kinase family.

It localises to the cytoplasm. It catalyses the reaction L-glutamate + ATP = L-glutamyl 5-phosphate + ADP. The protein operates within amino-acid biosynthesis; L-proline biosynthesis; L-glutamate 5-semialdehyde from L-glutamate: step 1/2. Catalyzes the transfer of a phosphate group to glutamate to form L-glutamate 5-phosphate. In Rhodopseudomonas palustris (strain BisB18), this protein is Glutamate 5-kinase.